Consider the following 619-residue polypeptide: Coagulation factor X-activating enzyme heavy chain (619 aa).

An N-terminal signal peptide occupies residues M1–S20. The propeptide occupies I21 to Q188. Residues I199–P393 form the Peptidase M12B domain. A disulfide bridge links C215 with C251. N-linked (GlcNAc...) (complex) asparagine glycans are attached at residues N216 and N257. 3 disulfides stabilise this stretch: C308-C388, C348-C372, and C350-C355. Zn(2+) is bound at residue H333. E334 is a catalytic residue. Zn(2+)-binding residues include H337 and H343. Residues N351 and N371 are each glycosylated (N-linked (GlcNAc...) (complex) asparagine). The Disintegrin domain occupies P401–N487. Residues V403, N406, I408, E410, E413, and D416 each contribute to the Ca(2+) site. Intrachain disulfides connect C404/C433, C415/C428, C417/C423, C427/C450, C441/C447, C446/C472, C459/C479, C466/C498, C491/C503, C510/C560, C525/C571, C538/C548, C555/C597, and C591/C603. Positions E465 to D467 match the D/ECD-tripeptide motif. Residues D467, V468, E470, D482, and Q483 each coordinate Ca(2+).

This sequence belongs to the venom metalloproteinase (M12B) family. P-III subfamily. P-IIId sub-subfamily. In terms of assembly, heterotrimer; disulfide-linked. The heterotrimer consists of 1 heavy chain and 2 light chains (lectins): LC1 and LC2. It depends on Zn(2+) as a cofactor. In terms of processing, N-glycosylated; probably required for conformation. Removal of easily accessible sugars does not change its functional capacity, but removal of the core sugars with N-glycanase causes a virtually complete loss of enzyme activity, apparently as a result of major conformational changes in the molecule. Not O-glycosylated. Expressed by the venom gland.

Its subcellular location is the secreted. It catalyses the reaction Specifically activates several components of the blood clotting system, including coagulation factor X, coagulation factor IX and protein C by cleavage of Arg-|-Xaa bonds. Has no action on insulin B chain.. In terms of biological role, catalytic subunit of blood coagulation factor X-activating enzyme. Activates coagulation factor X (F10) by cleaving the Arg-Ile bond and is also able to activate coagulation factor IX (F9) and protein S (PROS1) by specific cleavage of Arg-Ile and Arg-Val bonds. The polypeptide is Coagulation factor X-activating enzyme heavy chain (Daboia siamensis (Eastern Russel's viper)).